The sequence spans 861 residues: Ataxin-7-like protein 1 (861 aa).

Disordered stretches follow at residues 1–31, 154–189, 342–448, 606–673, and 772–861; these read MTSE…AMAT, GHHS…KGSR, KSRE…GADE, PIPA…LSGP, and FDKS…RTLP. The region spanning 284-351 is the SCA7 domain; that stretch reads RRLSEREFDP…KSREKEVKDK (68 aa). Over residues 342–354 the composition is skewed to basic and acidic residues; it reads KSREKEVKDKEHL. Positions 355–369 are enriched in polar residues; that stretch reads LTSTREILPSQSGPA. Composition is skewed to low complexity over residues 372 to 381, 403 to 417, and 606 to 616; these read SLLGSSGSSG, SSAN…SNHS, and PIPAVIPSPSH. Residues 617-627 show a composition bias toward basic residues; sequence KPSKTKTSKSS. Basic and acidic residues predominate over residues 628–641; that stretch reads KVKDLSTRSDESPS. Low complexity-rich tracts occupy residues 648-671 and 783-794; these read QSST…SPLS and SSSSSKACKITK. The span at 817 to 828 shows a compositional bias: polar residues; the sequence is VNSTSSRQVGKN. A compositionally biased stretch (low complexity) spans 829–847; it reads SSLALSQSSPSSISSPGHS.

The sequence is that of Ataxin-7-like protein 1 (ATXN7L1) from Homo sapiens (Human).